Here is a 666-residue protein sequence, read N- to C-terminus: Transketolase (666 aa).

His26 provides a ligand contact to substrate. Thiamine diphosphate-binding positions include His66 and 114–116 (GPL). Asp155 contributes to the Mg(2+) binding site. Positions 156 and 185 each coordinate thiamine diphosphate. Residues Asn185 and Ile187 each contribute to the Mg(2+) site. Substrate is bound by residues His261, Arg358, and Ser385. Position 261 (His261) interacts with thiamine diphosphate. The active-site Proton donor is the Glu411. Position 437 (Phe437) interacts with thiamine diphosphate. Positions 461, 469, and 520 each coordinate substrate.

The protein belongs to the transketolase family. Homodimer. Requires Mg(2+) as cofactor. The cofactor is Ca(2+). Mn(2+) serves as cofactor. Co(2+) is required as a cofactor. It depends on thiamine diphosphate as a cofactor.

It catalyses the reaction D-sedoheptulose 7-phosphate + D-glyceraldehyde 3-phosphate = aldehydo-D-ribose 5-phosphate + D-xylulose 5-phosphate. In terms of biological role, catalyzes the transfer of a two-carbon ketol group from a ketose donor to an aldose acceptor, via a covalent intermediate with the cofactor thiamine pyrophosphate. This chain is Transketolase (tkt), found in Buchnera aphidicola subsp. Baizongia pistaciae (strain Bp).